A 309-amino-acid polypeptide reads, in one-letter code: Probable HTH-type transcriptional regulator LtrA (309 aa).

Residues 1 to 61 (MNLNLLPDLA…QRTTRKLRLS (61 aa)) form the HTH lysR-type domain. Residues 21-40 (FSAVARQNGITPSAVSRSVS) constitute a DNA-binding region (H-T-H motif).

Belongs to the LysR transcriptional regulatory family.

The polypeptide is Probable HTH-type transcriptional regulator LtrA (ltrA) (Klebsiella pneumoniae).